A 341-amino-acid chain; its full sequence is DNA-directed RNA polymerase subunit alpha (341 aa).

The alpha N-terminal domain (alpha-NTD) stretch occupies residues 1–226 (MLIAQRPTIT…ELFGLVRELN (226 aa)). Residues 241 to 341 (AALAADLALP…DQRYIETEQL (101 aa)) form an alpha C-terminal domain (alpha-CTD) region.

This sequence belongs to the RNA polymerase alpha chain family. In terms of assembly, homodimer. The RNAP catalytic core consists of 2 alpha, 1 beta, 1 beta' and 1 omega subunit. When a sigma factor is associated with the core the holoenzyme is formed, which can initiate transcription.

The enzyme catalyses RNA(n) + a ribonucleoside 5'-triphosphate = RNA(n+1) + diphosphate. Its function is as follows. DNA-dependent RNA polymerase catalyzes the transcription of DNA into RNA using the four ribonucleoside triphosphates as substrates. This Acidothermus cellulolyticus (strain ATCC 43068 / DSM 8971 / 11B) protein is DNA-directed RNA polymerase subunit alpha.